The primary structure comprises 86 residues: Omega-theraphotoxin-Hhn1f 1 (86 aa).

The signal sequence occupies residues 1–21; the sequence is MKSIVFVALFGLALLAVVCSA. Positions 22-50 are excised as a propeptide; the sequence is SEDAHKELLKEVVRAMVVDKTDAVQAEER. Cystine bridges form between cysteine 52–cysteine 66, cysteine 59–cysteine 71, and cysteine 65–cysteine 78.

The protein belongs to the neurotoxin 10 (Hwtx-1) family. 17 (Hntx-9) subfamily. Expressed by the venom gland.

Its subcellular location is the secreted. Its function is as follows. Ion channel inhibitor. This Cyriopagopus hainanus (Chinese bird spider) protein is Omega-theraphotoxin-Hhn1f 1.